The following is a 225-amino-acid chain: LHFPL tetraspan subfamily member 2a protein (225 aa).

The next 4 membrane-spanning stretches (helical) occupy residues 11 to 31 (MLWT…FLST), 99 to 119 (IFLA…IFTM), 129 to 149 (IFNV…VGLV), and 178 to 198 (AGWA…CAVF).

It belongs to the LHFP family.

It is found in the membrane. Functionally, plays a role in fertility. Involved in distal reproductive tract development. The protein is LHFPL tetraspan subfamily member 2a protein of Danio rerio (Zebrafish).